The sequence spans 218 residues: Protein Syd (218 aa).

Belongs to the Syd family.

It localises to the cell inner membrane. Functionally, interacts with the SecY protein in vivo. May bind preferentially to an uncomplexed state of SecY, thus functioning either as a chelating agent for excess SecY in the cell or as a regulatory factor that negatively controls the translocase function. This chain is Protein Syd, found in Shewanella denitrificans (strain OS217 / ATCC BAA-1090 / DSM 15013).